The sequence spans 275 residues: Glycerol-3-phosphate dehydrogenase [NAD(P)+] (275 aa).

3 residues coordinate NADPH: Trp12, Arg32, and Lys105. 3 residues coordinate sn-glycerol 3-phosphate: Lys105, Gly133, and Thr135. Ala137 provides a ligand contact to NADPH. The sn-glycerol 3-phosphate site is built by Lys188, Asp241, Ser251, Arg252, and Asn253. Lys188 acts as the Proton acceptor in catalysis. Arg252 contacts NADPH.

Belongs to the NAD-dependent glycerol-3-phosphate dehydrogenase family.

It localises to the cytoplasm. It carries out the reaction sn-glycerol 3-phosphate + NAD(+) = dihydroxyacetone phosphate + NADH + H(+). The catalysed reaction is sn-glycerol 3-phosphate + NADP(+) = dihydroxyacetone phosphate + NADPH + H(+). It participates in membrane lipid metabolism; glycerophospholipid metabolism. Its function is as follows. Catalyzes the reduction of the glycolytic intermediate dihydroxyacetone phosphate (DHAP) to sn-glycerol 3-phosphate (G3P), the key precursor for phospholipid synthesis. The polypeptide is Glycerol-3-phosphate dehydrogenase [NAD(P)+] (Paramagnetospirillum magneticum (strain ATCC 700264 / AMB-1) (Magnetospirillum magneticum)).